The following is a 582-amino-acid chain: Cryptochrome-2 (582 aa).

Residues Cys-12–Leu-141 enclose the Photolyase/cryptochrome alpha/beta domain. Residues Ser-261, Gln-298, His-364, and Asp-396–Asp-398 contribute to the FAD site. Residues Gly-521–Cys-559 are disordered. Residues Ala-527 to Ala-546 show a composition bias toward polar residues.

Belongs to the DNA photolyase class-1 family. Component of the circadian core oscillator, which includes the CRY proteins, CLOCK or NPAS2, BMAL1 or BMAL2, CSNK1E, and the PER proteins. Requires FAD as cofactor. (6R)-5,10-methylene-5,6,7,8-tetrahydrofolate is required as a cofactor. In terms of tissue distribution, expressed in the pineal gland.

Its subcellular location is the cytoplasm. It localises to the nucleus. Its function is as follows. Transcriptional repressor which forms a core component of the circadian clock. The circadian clock, an internal time-keeping system, regulates various physiological processes through the generation of approximately 24 hour circadian rhythms in gene expression, which are translated into rhythms in metabolism and behavior. It is derived from the Latin roots 'circa' (about) and 'diem' (day) and acts as an important regulator of a wide array of physiological functions including metabolism, sleep, body temperature, blood pressure, endocrine, immune, cardiovascular, and renal function. Consists of two major components: the central clock, residing in the suprachiasmatic nucleus (SCN) of the brain, and the peripheral clocks that are present in nearly every tissue and organ system. Both the central and peripheral clocks can be reset by environmental cues, also known as Zeitgebers (German for 'timegivers'). The predominant Zeitgeber for the central clock is light, which is sensed by retina and signals directly to the SCN. The central clock entrains the peripheral clocks through neuronal and hormonal signals, body temperature and feeding-related cues, aligning all clocks with the external light/dark cycle. Circadian rhythms allow an organism to achieve temporal homeostasis with its environment at the molecular level by regulating gene expression to create a peak of protein expression once every 24 hours to control when a particular physiological process is most active with respect to the solar day. Transcription and translation of core clock components (CLOCK, NPAS2, BMAL1, BMAL2, PER1, PER2, PER3, CRY1 and CRY2) plays a critical role in rhythm generation, whereas delays imposed by post-translational modifications (PTMs) are important for determining the period (tau) of the rhythms (tau refers to the period of a rhythm and is the length, in time, of one complete cycle). A diurnal rhythm is synchronized with the day/night cycle, while the ultradian and infradian rhythms have a period shorter and longer than 24 hours, respectively. Disruptions in the circadian rhythms contribute to the pathology of cardiovascular diseases, cancer, metabolic syndromes and aging. A transcription/translation feedback loop (TTFL) forms the core of the molecular circadian clock mechanism. Transcription factors, CLOCK or NPAS2 and BMAL1 or BMAL2, form the positive limb of the feedback loop, act in the form of a heterodimer and activate the transcription of core clock genes and clock-controlled genes (involved in key metabolic processes), harboring E-box elements (5'-CACGTG-3') within their promoters. The core clock genes: PER1/2/3 and CRY1/2 which are transcriptional repressors form the negative limb of the feedback loop and interact with the CLOCK|NPAS2-BMAL1|BMAL2 heterodimer inhibiting its activity and thereby negatively regulating their own expression. This heterodimer also activates nuclear receptors NR1D1/2, RORA/B/G, which form a second feedback loop and which activate and repress BMAL1 transcription, respectively. CRY1 and CRY2 have redundant functions but also differential and selective contributions at least in defining the pace of the SCN circadian clock and its circadian transcriptional outputs. Less potent transcriptional repressor in cerebellum and liver than CRY1, though less effective in lengthening the period of the SCN oscillator. Seems to play a critical role in tuning SCN circadian period by opposing the action of CRY1. With CRY1, dispensable for circadian rhythm generation but necessary for the development of intercellular networks for rhythm synchrony. Represses CLOCK-BMAL1-mediated transcriptional activation. This Gallus gallus (Chicken) protein is Cryptochrome-2 (CRY2).